The chain runs to 163 residues: Anaerobic nitrite reductase HB1 (163 aa).

One can recognise a Globin domain in the interval 8-157; the sequence is VFTEEQEALV…LVAAIKIEMK (150 aa). A Homodimerization motif is present at residues 41-45; it reads EIAPS. Heme b-binding residues include Ser-51, Lys-65, His-69, Lys-99, Thr-103, and His-104. The short motif at 111 to 123 is the Homodimerization element; the sequence is DEHFEVTKFALLE.

It belongs to the plant globin family. In terms of assembly, homodimer. It depends on heme b as a cofactor.

The protein localises to the cytoplasm. The protein resides in the nucleus. It catalyses the reaction Fe(III)-heme b-[protein] + nitric oxide + H2O = Fe(II)-heme b-[protein] + nitrite + 2 H(+). Functionally, phytoglobin that reduces nitrite to nitric oxide (NO) under anoxic conditions (e.g. during flooding or in waterlogged soil). May not function as an oxygen storage or transport protein. Has an unusually high affinity for O(2) through an hexacoordinate heme iron because of a very low dissociation constant. The sequence is that of Anaerobic nitrite reductase HB1 from Gossypium hirsutum (Upland cotton).